The sequence spans 361 residues: Glutaminyl-peptide cyclotransferase (361 aa).

Residues 1 to 28 (MAGGRHRRVVGTLHLLLLVAALPWASRG) form the signal peptide. Asparagine 49 carries N-linked (GlcNAc...) asparagine glycosylation. The cysteines at positions 139 and 164 are disulfide-linked. Aspartate 159 serves as a coordination point for Zn(2+). The active-site Proton acceptor is glutamate 201. Glutamate 202 provides a ligand contact to Zn(2+). Aspartate 248 (proton acceptor) is an active-site residue. Residue asparagine 296 is glycosylated (N-linked (GlcNAc...) asparagine). Zn(2+) is bound at residue histidine 330.

This sequence belongs to the glutaminyl-peptide cyclotransferase family.

The protein localises to the secreted. The enzyme catalyses N-terminal L-glutaminyl-[peptide] = N-terminal 5-oxo-L-prolyl-[peptide] + NH4(+). Responsible for the biosynthesis of pyroglutamyl peptides. Has a bias against acidic and tryptophan residues adjacent to the N-terminal glutaminyl residue and a lack of importance of chain length after the second residue. Also catalyzes N-terminal pyroglutamate formation. In vitro, catalyzes pyroglutamate formation of N-terminally truncated form of APP amyloid-beta peptides [Glu-3]-amyloid-beta. May be involved in the N-terminal pyroglutamate formation of several amyloid-related plaque-forming peptides. This chain is Glutaminyl-peptide cyclotransferase (QPCT), found in Homo sapiens (Human).